Reading from the N-terminus, the 25-residue chain is Zinc metalloproteinase-disintegrin-like daborhagin-M (25 aa).

Residues 14–25 (SYVELIITVDHS) enclose the Peptidase M12B domain. E17 serves as a coordination point for Ca(2+).

This sequence belongs to the venom metalloproteinase (M12B) family. P-III subfamily. P-IIIa sub-subfamily. As to quaternary structure, monomer. Zn(2+) serves as cofactor. N-glycosylated. Post-translationally, contains 16 disulfide bonds. Expressed by the venom gland.

It is found in the secreted. Inhibited by EDTA, EGTA and 1,10-phenanthroline. Addition of Mg(2+) or Ca(2+) increases the casein hydrolysis rate. In terms of biological role, snake venom zinc metalloprotease that possesses high hemorrhagic activity (minimum hemorrhagic dose, MHD=0.86 ug) when subcutaneously injected into mice. Has potent fibrinogenolytic activity on alpha-chain of fibrinogen (FGA). Hydrolyzes model substrate (beta-chain of insulin) at Ala(14)-Leu(15) and Tyr(16)-Leu(17) followed by His(10)-Leu(11) and Phe(24)-Phe(25). This chain is Zinc metalloproteinase-disintegrin-like daborhagin-M, found in Daboia siamensis (Eastern Russel's viper).